Reading from the N-terminus, the 135-residue chain is Ribosomal RNA large subunit methyltransferase H (135 aa).

Residues leucine 52, glycine 83, and 102–107 (LSSLTL) contribute to the S-adenosyl-L-methionine site.

This sequence belongs to the RNA methyltransferase RlmH family. Homodimer.

The protein resides in the cytoplasm. It carries out the reaction pseudouridine(1915) in 23S rRNA + S-adenosyl-L-methionine = N(3)-methylpseudouridine(1915) in 23S rRNA + S-adenosyl-L-homocysteine + H(+). Specifically methylates the pseudouridine at position 1915 (m3Psi1915) in 23S rRNA. The protein is Ribosomal RNA large subunit methyltransferase H of Polynucleobacter necessarius subsp. necessarius (strain STIR1).